Consider the following 393-residue polypeptide: Alpha-1,2 mannosyltransferase KTR1 (393 aa).

The Cytoplasmic portion of the chain corresponds to 1–16; that stretch reads MAKIMIPASKQPVYKK. Residues 17-34 traverse the membrane as a helical; Signal-anchor for type II membrane protein segment; the sequence is LGLLLVAVFTVYVFFHGA. A stem region region spans residues 35–68; that stretch reads QYARGSAPSPKYSTVLSSGSGYKYSKVELPKYTG. Residues 35 to 393 lie on the Lumenal side of the membrane; it reads QYARGSAPSP…KPAGWQNHIG (359 aa). Residues 69–393 are catalytic; it reads PREKATFVTL…KPAGWQNHIG (325 aa). Asn120 is a glycosylation site (N-linked (GlcNAc...) asparagine). Glu280 serves as the catalytic Nucleophile.

It belongs to the glycosyltransferase 15 family. Mn(2+) is required as a cofactor. In terms of processing, N-glycosylated.

The protein localises to the golgi apparatus membrane. It functions in the pathway protein modification; protein glycosylation. Its function is as follows. Mannosyltransferase that transfers a mannose residue from GDP-mannose to a range of acceptors in vitro, forming an alpha-(1-&gt;2)-D-mannosyl-D-mannose linkage. The protein is Alpha-1,2 mannosyltransferase KTR1 (KTR1) of Saccharomyces cerevisiae (strain ATCC 204508 / S288c) (Baker's yeast).